The primary structure comprises 150 residues: Large ribosomal subunit protein uL11 (150 aa).

The protein belongs to the universal ribosomal protein uL11 family. As to quaternary structure, part of the ribosomal stalk of the 50S ribosomal subunit. Interacts with L10 and the large rRNA to form the base of the stalk. L10 forms an elongated spine to which L12 dimers bind in a sequential fashion forming a multimeric L10(L12)X complex. One or more lysine residues are methylated.

Forms part of the ribosomal stalk which helps the ribosome interact with GTP-bound translation factors. The sequence is that of Large ribosomal subunit protein uL11 from Cereibacter sphaeroides (strain ATCC 17025 / ATH 2.4.3) (Rhodobacter sphaeroides).